We begin with the raw amino-acid sequence, 447 residues long: ATP-dependent protease ATPase subunit HslU (447 aa).

ATP-binding positions include Ile-18, 60–65 (GVGKTE), Asp-259, Glu-325, and Arg-397.

The protein belongs to the ClpX chaperone family. HslU subfamily. A double ring-shaped homohexamer of HslV is capped on each side by a ring-shaped HslU homohexamer. The assembly of the HslU/HslV complex is dependent on binding of ATP.

It is found in the cytoplasm. ATPase subunit of a proteasome-like degradation complex; this subunit has chaperone activity. The binding of ATP and its subsequent hydrolysis by HslU are essential for unfolding of protein substrates subsequently hydrolyzed by HslV. HslU recognizes the N-terminal part of its protein substrates and unfolds these before they are guided to HslV for hydrolysis. The sequence is that of ATP-dependent protease ATPase subunit HslU from Burkholderia thailandensis (strain ATCC 700388 / DSM 13276 / CCUG 48851 / CIP 106301 / E264).